We begin with the raw amino-acid sequence, 373 residues long: 4-hydroxy-3-methylbut-2-en-1-yl diphosphate synthase (flavodoxin) (373 aa).

4 residues coordinate [4Fe-4S] cluster: Cys-270, Cys-273, Cys-305, and Glu-312.

It belongs to the IspG family. The cofactor is [4Fe-4S] cluster.

It carries out the reaction (2E)-4-hydroxy-3-methylbut-2-enyl diphosphate + oxidized [flavodoxin] + H2O + 2 H(+) = 2-C-methyl-D-erythritol 2,4-cyclic diphosphate + reduced [flavodoxin]. The protein operates within isoprenoid biosynthesis; isopentenyl diphosphate biosynthesis via DXP pathway; isopentenyl diphosphate from 1-deoxy-D-xylulose 5-phosphate: step 5/6. Functionally, converts 2C-methyl-D-erythritol 2,4-cyclodiphosphate (ME-2,4cPP) into 1-hydroxy-2-methyl-2-(E)-butenyl 4-diphosphate. The polypeptide is 4-hydroxy-3-methylbut-2-en-1-yl diphosphate synthase (flavodoxin) (Klebsiella pneumoniae subsp. pneumoniae (strain ATCC 700721 / MGH 78578)).